Reading from the N-terminus, the 1232-residue chain is Anoctamin-8 (1232 aa).

The interval 1–32 (MAEAASGAGGTSLEGERGKRPPPEGEPAAPAS) is disordered. A2 bears the N-acetylalanine mark. The Extracellular segment spans residues 2–244 (AEAASGAGGT…DDICDYFGVK (243 aa)). Residues 14–23 (EGERGKRPPP) are compositionally biased toward basic and acidic residues. The helical transmembrane segment at 245–265 (IAMYFAWLGFYTSAMVYPAVF) threads the bilayer. Residues 266-281 (GSVLYTFTEADQTSRD) are Cytoplasmic-facing. A helical membrane pass occupies residues 282–302 (VSCVVFALFNVIWSTLFLEEW). The Extracellular portion of the chain corresponds to 303–356 (KRRGAELAYKWGTLDSPGEAVEEPRPQFRGVRRISPITRAEEFYYPPWKRLLFQ). S318 is modified (phosphoserine). A helical membrane pass occupies residues 357-377 (LLVSLPLCLACLVCVFLLMLG). At 378–400 (CFQLQELVLSVKGLPRLARFLPK) the chain is on the cytoplasmic side. The helical transmembrane segment at 401-421 (VMLALLVSVSAEGYKKLAIWL) threads the bilayer. Residues 422 to 437 (NDMENYRLESAYEKHL) are Extracellular-facing. The helical transmembrane segment at 438 to 458 (IIKVVLFQFVNSYLSLFYIGF) threads the bilayer. The Cytoplasmic segment spans residues 459 to 750 (YLKDMERLKE…YEDTFQDYQE (292 aa)). The tract at residues 524–650 (RRLEPQADEG…SPTMVEKGLE (127 aa)) is disordered. Residues 532 to 551 (EGGGGGSGGGGRRCLSGGCG) show a composition bias toward gly residues. A compositionally biased stretch (acidic residues) spans 582–606 (EEDEDDEEEEDEEEEEDEEEGEEGG). S669 bears the Phosphoserine mark. A disordered region spans residues 681–728 (RAGGEGRDQGPDGGPDPEPGSNSDSTRRQRRQNRSSWIDPPEEEHSPQ). The helical transmembrane segment at 751–771 (MFVQFGYVVLFSSAFPLAALC) threads the bilayer. Over 772–807 (ALVNNLIEIRSDAFKLCTGLQRPFGQRVESIGQWQK) the chain is Extracellular. S801 bears the Phosphoserine; by FAM20C mark. Residues 808-828 (VMEAMGVLAIVVNCYLIGQCG) form a helical membrane-spanning segment. Residues 829–841 (QLQRLFPWLSPEA) are Cytoplasmic-facing. A helical membrane pass occupies residues 842–862 (AIVSVVVLEHFALLLKYLIHV). Residues 863–1232 (AIPDIPGWVA…QAVCWPSGWH (370 aa)) lie on the Extracellular side of the membrane. Disordered stretches follow at residues 888–970 (RHER…GSLL), 997–1152 (LAAA…WQWD), and 1174–1232 (PPCA…SGWH). Residues 904 to 932 (RREEEERQRHAEHHARREHDSGGREEARA) show a composition bias toward basic and acidic residues. Composition is skewed to low complexity over residues 933–953 (EGSGLDPATSSEKASAKAKGS) and 997–1006 (LAAAGAGATT). Position 1020 is an asymmetric dimethylarginine; alternate (R1020). R1020 bears the Omega-N-methylarginine; alternate mark. Positions 1031–1043 (KSPETRRDSERSH) are enriched in basic and acidic residues. Residues 1078 to 1087 (TPSSGSSRVQ) show a composition bias toward polar residues. Pro residues-rich tracts occupy residues 1130–1145 (PAPPPPMPLPRPPTPP) and 1197–1221 (LPPPPLPPTSDPLETPAPSPSPSPS).

This sequence belongs to the anoctamin family. Expressed in embryonic stem cells, fetal brain and neural tissues.

It is found in the cell membrane. Does not exhibit calcium-activated chloride channel (CaCC) activity. The protein is Anoctamin-8 (ANO8) of Homo sapiens (Human).